The primary structure comprises 292 residues: MAPRAYWKGSLKLSLVTCPVVLYPASTSVEKTRFHLINRETGNRLKQQMIDAETGDLVEGDQKGRGYELSKGQYVEIEPEELEAVQIESNHTIDIDSFVPREEIDQRYLNHPYYIAPDGKAAVDAFAVIRDAMKDQDRVALARIVLTHREHVIAIEPMGKGMLGTTLRFPYELRDEAEFFDDIKAPKITKDMVELAGHILQTKAAHFKPSEFKDQYETALKALVKRKASGKPIKLPEPEERSGNVVSLMDALKQSLGKGDKKAAPAPSRRAPAHRRPAKKAHRSAARQRKAG.

Residues 12 to 196 form the Ku domain; that stretch reads KLSLVTCPVV…KITKDMVELA (185 aa). Positions 231–292 are disordered; it reads KPIKLPEPEE…RSAARQRKAG (62 aa). Residues 271-292 are compositionally biased toward basic residues; the sequence is APAHRRPAKKAHRSAARQRKAG.

The protein belongs to the prokaryotic Ku family. In terms of assembly, homodimer. Interacts with LigD.

Its function is as follows. With LigD forms a non-homologous end joining (NHEJ) DNA repair enzyme, which repairs dsDNA breaks with reduced fidelity. Binds linear dsDNA with 5'- and 3'- overhangs but not closed circular dsDNA nor ssDNA. Recruits and stimulates the ligase activity of LigD. The protein is Non-homologous end joining protein Ku of Bradyrhizobium sp. (strain ORS 278).